The primary structure comprises 147 residues: Hemoglobin subunit delta (147 aa).

Residues His-3–His-147 enclose the Globin domain. Ser-51 is modified (phosphoserine). Heme b-binding residues include His-64 and His-93.

It belongs to the globin family. As to quaternary structure, heterotetramer of two delta chains and two alpha chains. In terms of tissue distribution, red blood cells.

This chain is Hemoglobin subunit delta (HBD), found in Otolemur crassicaudatus (Brown greater galago).